Reading from the N-terminus, the 539-residue chain is Putative cysteine ligase BshC (539 aa).

ADP is bound by residues S146 and 384 to 386; that span reads ERH. The stretch at 455-475 forms a coiled coil; the sequence is LLKNAAFIQDQLQFLERTVMK. ADP-binding positions include 490 to 493, W506, and Y510; that span reads RIQN.

The protein belongs to the BshC family. Homodimer in solution.

In terms of biological role, involved in bacillithiol (BSH) biosynthesis. May catalyze the last step of the pathway, the addition of cysteine to glucosamine malate (GlcN-Mal) to generate BSH. This chain is Putative cysteine ligase BshC, found in Bacillus subtilis (strain 168).